The sequence spans 384 residues: Shufflon-specific DNA recombinase (384 aa).

Residues Met9–Arg96 form the Core-binding (CB) domain. The region spanning Gly118–Asp284 is the Tyr recombinase domain. Active-site residues include Arg155, Lys180, His235, Arg238, and His262. Tyr271 (O-(3'-phospho-DNA)-tyrosine intermediate) is an active-site residue.

Belongs to the 'phage' integrase family.

Functionally, shufflon-specific DNA recombinase. The chain is Shufflon-specific DNA recombinase (rci) from Escherichia coli.